Here is a 404-residue protein sequence, read N- to C-terminus: 11-beta-hydroxysteroid dehydrogenase type 2 (404 aa).

82 to 111 (TRAVLITGCDSGFGNATAKKLDTMGFTVLA) serves as a coordination point for NAD(+). A substrate-binding site is contributed by Ser-219. Tyr-232 serves as the catalytic Proton acceptor. A disordered region spans residues 383–404 (LTSARDIAQDQGPRPDPSPTAQ).

The protein belongs to the short-chain dehydrogenases/reductases (SDR) family. Interacts with ligand-free cytoplasmic NR3C2. In terms of tissue distribution, highly expressed in kidney, adrenal and colon; detected at lower levels on lung, liver, and spleen. Expressed in oocytes. Expressed in uterine tissues and in corpora lutea.

The protein resides in the microsome. It is found in the endoplasmic reticulum. The catalysed reaction is an 11beta-hydroxysteroid + NAD(+) = an 11-oxosteroid + NADH + H(+). It catalyses the reaction corticosterone + NAD(+) = 11-dehydrocorticosterone + NADH + H(+). It carries out the reaction cortisol + NAD(+) = cortisone + NADH + H(+). The enzyme catalyses 11beta,17beta-dihydroxyandrost-4-ene-3-one + NAD(+) = 17beta-hydroxyandrost-4-ene-3,11-dione + NADH + H(+). The catalysed reaction is 11beta-hydroxyandrost-4-ene-3,17-dione + NAD(+) = androst-4-ene-3,11,17-trione + NADH + H(+). Its pathway is steroid metabolism. With respect to regulation, inhibited by glycyrrhetinic acid, carbenoloxone, 11-alpha-OH-progesterone and 11-beta-OH-progesterone. Functionally, catalyzes the conversion of biologically active 11beta-hydroxyglucocorticoids (11beta-hydroxysteroid) such as cortisol, to inactive 11-ketoglucocorticoids (11-oxosteroid) such as cortisone, in the presence of NAD(+). Functions as a dehydrogenase (oxidase), thereby decreasing the concentration of active glucocorticoids, thus protecting the nonselective mineralocorticoid receptor from occupation by glucocorticoids. Affinity towards corticosterone is higher than cortisol or dexamethasone. Plays an important role in maintaining glucocorticoids balance during preimplantation and protects the fetus from excessive maternal corticosterone exposure. Catalyzes the oxidation of 11beta-hydroxytestosterone (11beta,17beta-dihydroxyandrost-4-ene-3-one) to 11-ketotestosterone (17beta-hydroxyandrost-4-ene-3,11-dione), a major bioactive androgen. Catalyzes the conversion of 11beta-hydroxyandrostenedione (11beta-hydroxyandrost-4-ene-3,17-dione) to 11-ketoandrostenedione (androst-4-ene-3,11,17-trione), which can be further metabolized to 11-ketotestosterone. Converts 7-beta-25-dihydroxycholesterol to 7-oxo-25-hydroxycholesterol in vitro. 7-beta-25-dihydroxycholesterol (not 7-oxo-25-hydroxycholesterol) acts as ligand for the G-protein-coupled receptor (GPCR) Epstein-Barr virus-induced gene 2 (EBI2) and may thereby regulate immune cell migration. May protect ovulating oocytes and fertilizing spermatozoa from the adverse effects of cortisol. In Bos taurus (Bovine), this protein is 11-beta-hydroxysteroid dehydrogenase type 2 (HSD11B2).